The chain runs to 165 residues: Small ribosomal subunit protein uS5 (165 aa).

An S5 DRBM domain is found at 10 to 73 (LVEKLVAVDR…EAARRNMITV (64 aa)).

The protein belongs to the universal ribosomal protein uS5 family. Part of the 30S ribosomal subunit. Contacts proteins S4 and S8.

With S4 and S12 plays an important role in translational accuracy. In terms of biological role, located at the back of the 30S subunit body where it stabilizes the conformation of the head with respect to the body. This chain is Small ribosomal subunit protein uS5, found in Acinetobacter baumannii (strain AB307-0294).